Here is a 340-residue protein sequence, read N- to C-terminus: GTP 3',8-cyclase (340 aa).

One can recognise a Radical SAM core domain in the interval 20-246 (RFERQYVYLR…PKALSDGPAK (227 aa)). Arginine 29 contributes to the GTP binding site. [4Fe-4S] cluster contacts are provided by cysteine 36 and cysteine 40. Tyrosine 42 is an S-adenosyl-L-methionine binding site. Cysteine 43 provides a ligand contact to [4Fe-4S] cluster. Position 79 (arginine 79) interacts with GTP. Position 83 (glycine 83) interacts with S-adenosyl-L-methionine. Threonine 110 contacts GTP. Position 134 (serine 134) interacts with S-adenosyl-L-methionine. Lysine 171 contacts GTP. Methionine 205 provides a ligand contact to S-adenosyl-L-methionine. [4Fe-4S] cluster contacts are provided by cysteine 268 and cysteine 271. 273 to 275 (RLR) lines the GTP pocket. Cysteine 285 contacts [4Fe-4S] cluster.

The protein belongs to the radical SAM superfamily. MoaA family. Monomer and homodimer. It depends on [4Fe-4S] cluster as a cofactor.

It carries out the reaction GTP + AH2 + S-adenosyl-L-methionine = (8S)-3',8-cyclo-7,8-dihydroguanosine 5'-triphosphate + 5'-deoxyadenosine + L-methionine + A + H(+). The protein operates within cofactor biosynthesis; molybdopterin biosynthesis. Functionally, catalyzes the cyclization of GTP to (8S)-3',8-cyclo-7,8-dihydroguanosine 5'-triphosphate. The sequence is that of GTP 3',8-cyclase from Actinobacillus pleuropneumoniae serotype 3 (strain JL03).